Consider the following 176-residue polypeptide: MTNIRKSHPLIKIVNDAFIDLPAPSNISSWWNFGSLLGVCLIVQILTGLFLAMHYTSDTATAFNSVTHICRDVNYGWLLRYLHANGASMFFICLYLHIGRGLYYGSYTYTETWNVGVILLFAVMATAFMGYVLPWGQMSFWGATVITNLLSAIPYIGTELVQWIWGGLSVDKATLT.

3 helical membrane passes run 33–53 (FGSLLGVCLIVQILTGLFLAM), 77–98 (WLLRYLHANGASMFFICLYLHI), and 113–133 (WNVGVILLFAVMATAFMGYVL). 2 residues coordinate heme b: His83 and His97.

Belongs to the cytochrome b family. As to quaternary structure, the cytochrome bc1 complex contains 11 subunits: 3 respiratory subunits (MT-CYB, CYC1 and UQCRFS1), 2 core proteins (UQCRC1 and UQCRC2) and 6 low-molecular weight proteins (UQCRH/QCR6, UQCRB/QCR7, UQCRQ/QCR8, UQCR10/QCR9, UQCR11/QCR10 and a cleavage product of UQCRFS1). This cytochrome bc1 complex then forms a dimer. Requires heme b as cofactor.

The protein resides in the mitochondrion inner membrane. Functionally, component of the ubiquinol-cytochrome c reductase complex (complex III or cytochrome b-c1 complex) that is part of the mitochondrial respiratory chain. The b-c1 complex mediates electron transfer from ubiquinol to cytochrome c. Contributes to the generation of a proton gradient across the mitochondrial membrane that is then used for ATP synthesis. The chain is Cytochrome b (MT-CYB) from Nyctinomops aurispinosus (Peale's free-tailed bat).